Here is a 127-residue protein sequence, read N- to C-terminus: Large ribosomal subunit protein uL22 (127 aa).

It belongs to the universal ribosomal protein uL22 family. As to quaternary structure, part of the 50S ribosomal subunit.

Functionally, this protein binds specifically to 23S rRNA; its binding is stimulated by other ribosomal proteins, e.g. L4, L17, and L20. It is important during the early stages of 50S assembly. It makes multiple contacts with different domains of the 23S rRNA in the assembled 50S subunit and ribosome. The globular domain of the protein is located near the polypeptide exit tunnel on the outside of the subunit, while an extended beta-hairpin is found that lines the wall of the exit tunnel in the center of the 70S ribosome. This chain is Large ribosomal subunit protein uL22, found in Methylorubrum extorquens (strain CM4 / NCIMB 13688) (Methylobacterium extorquens).